Here is a 648-residue protein sequence, read N- to C-terminus: Serine/threonine-protein kinase plk-1 (648 aa).

The interval 1–24 is disordered; sequence MNRLPNIAKPPQKSNQRKEKAPPE. The 252-residue stretch at 38–289 folds into the Protein kinase domain; the sequence is YEKGRFLGKG…AKQVQRDGFF (252 aa). Residues 44-52 and Lys67 contribute to the ATP site; that span reads LGKGGFAHC. Asp161 (proton acceptor) is an active-site residue. 2 consecutive POLO box domains span residues 412-492 and 514-596; these read WISK…YMND and TLRV…RLMS. A compositionally biased stretch (low complexity) spans 612–629; that stretch reads PRSMAAARSASAGSRGPN.

This sequence belongs to the protein kinase superfamily. Ser/Thr protein kinase family. CDC5/Polo subfamily. In terms of assembly, interacts with mex-5, mex-6 and spat-1. In terms of tissue distribution, embryos.

The protein resides in the cytoplasm. The protein localises to the cytoskeleton. It localises to the microtubule organizing center. Its subcellular location is the centrosome. It is found in the midbody. The protein resides in the nucleus. The protein localises to the chromosome. It localises to the centromere. Its subcellular location is the kinetochore. It catalyses the reaction L-seryl-[protein] + ATP = O-phospho-L-seryl-[protein] + ADP + H(+). It carries out the reaction L-threonyl-[protein] + ATP = O-phospho-L-threonyl-[protein] + ADP + H(+). In terms of biological role, required for oocyte nuclear envelope breakdown before entry of oocyte into spermatheca. In meiotic cells, required for spindle dynamics and probably for spindle attachment to the chromosomes. Zygotic role in the development of the germline and nerve cord. In mitotic cells, plays a role in spindle organization and centrosome maturation. Involved in asymmetric nuclear localization of cdc-25.1 during embryogenesis which affects cell division timing. Together with plk-2, regulates cytoplasm polarity in early embryos. May play a minor role in chromosome pairing and synapsis during oocyte meiosis I. The chain is Serine/threonine-protein kinase plk-1 (plk-1) from Caenorhabditis elegans.